A 218-amino-acid chain; its full sequence is uncharacterized protein (218 aa).

Helical transmembrane passes span 14-34 (CLLS…YFTS) and 175-195 (LIIP…LALV).

The protein to H.pylori HP0270.

The protein localises to the cell membrane. This is an uncharacterized protein from Rickettsia prowazekii (strain Madrid E).